A 493-amino-acid chain; its full sequence is Probable protein phosphatase 2C 40 (493 aa).

A PPM-type phosphatase domain is found at 145-480; the sequence is LLSAMEVQVA…DDVTIMVITL (336 aa). Positions 180, 181, 408, and 471 each coordinate Mn(2+).

This sequence belongs to the PP2C family. It depends on Mg(2+) as a cofactor. Requires Mn(2+) as cofactor.

It catalyses the reaction O-phospho-L-seryl-[protein] + H2O = L-seryl-[protein] + phosphate. The enzyme catalyses O-phospho-L-threonyl-[protein] + H2O = L-threonyl-[protein] + phosphate. This Arabidopsis thaliana (Mouse-ear cress) protein is Probable protein phosphatase 2C 40.